The primary structure comprises 147 residues: UPF0735 ACT domain-containing protein Cthe_1377 (147 aa).

Residues 71–146 enclose the ACT domain; it reads TLFFTVEDYA…GVKRQEILAR (76 aa).

The protein belongs to the UPF0735 family.

This is UPF0735 ACT domain-containing protein Cthe_1377 from Acetivibrio thermocellus (strain ATCC 27405 / DSM 1237 / JCM 9322 / NBRC 103400 / NCIMB 10682 / NRRL B-4536 / VPI 7372) (Clostridium thermocellum).